The following is a 410-amino-acid chain: Peptidase T (410 aa).

Position 79 (H79) interacts with Zn(2+). D81 is a catalytic residue. Residue D142 participates in Zn(2+) binding. The active-site Proton acceptor is E176. E177, D199, and H381 together coordinate Zn(2+).

The protein belongs to the peptidase M20B family. It depends on Zn(2+) as a cofactor.

It is found in the cytoplasm. It carries out the reaction Release of the N-terminal residue from a tripeptide.. Functionally, cleaves the N-terminal amino acid of tripeptides. This chain is Peptidase T, found in Listeria monocytogenes serotype 4b (strain F2365).